A 1403-amino-acid polypeptide reads, in one-letter code: DNA-directed RNA polymerase subunit beta' (1403 aa).

Residues cysteine 71, cysteine 73, cysteine 86, and cysteine 89 each contribute to the Zn(2+) site. Aspartate 462, aspartate 464, and aspartate 466 together coordinate Mg(2+). 4 residues coordinate Zn(2+): cysteine 811, cysteine 885, cysteine 892, and cysteine 895.

This sequence belongs to the RNA polymerase beta' chain family. The RNAP catalytic core consists of 2 alpha, 1 beta, 1 beta' and 1 omega subunit. When a sigma factor is associated with the core the holoenzyme is formed, which can initiate transcription. It depends on Mg(2+) as a cofactor. The cofactor is Zn(2+).

It catalyses the reaction RNA(n) + a ribonucleoside 5'-triphosphate = RNA(n+1) + diphosphate. Its function is as follows. DNA-dependent RNA polymerase catalyzes the transcription of DNA into RNA using the four ribonucleoside triphosphates as substrates. The protein is DNA-directed RNA polymerase subunit beta' of Bartonella tribocorum (strain CIP 105476 / IBS 506).